Here is a 459-residue protein sequence, read N- to C-terminus: tRNA modification GTPase MnmE (459 aa).

Residues arginine 21, glutamate 84, and arginine 123 each coordinate (6S)-5-formyl-5,6,7,8-tetrahydrofolate. A TrmE-type G domain is found at 219-378 (GVTVALAGAV…LLVLLYNFVL (160 aa)). Residues 229-234 (NAGKSS), 248-254 (TEHPGTT), and 273-276 (DTAG) contribute to the GTP site. 2 residues coordinate Mg(2+): serine 233 and threonine 254. Lysine 459 is a (6S)-5-formyl-5,6,7,8-tetrahydrofolate binding site.

Belongs to the TRAFAC class TrmE-Era-EngA-EngB-Septin-like GTPase superfamily. TrmE GTPase family. In terms of assembly, homodimer. Heterotetramer of two MnmE and two MnmG subunits. K(+) serves as cofactor.

It is found in the cytoplasm. Exhibits a very high intrinsic GTPase hydrolysis rate. Involved in the addition of a carboxymethylaminomethyl (cmnm) group at the wobble position (U34) of certain tRNAs, forming tRNA-cmnm(5)s(2)U34. This is tRNA modification GTPase MnmE from Lawsonia intracellularis (strain PHE/MN1-00).